The following is a 407-amino-acid chain: Imidazolonepropionase (407 aa).

Residues histidine 68 and histidine 70 each coordinate Fe(3+). The Zn(2+) site is built by histidine 68 and histidine 70. 3 residues coordinate 4-imidazolone-5-propanoate: arginine 77, tyrosine 140, and histidine 173. Residue tyrosine 140 participates in N-formimidoyl-L-glutamate binding. Position 238 (histidine 238) interacts with Fe(3+). Histidine 238 contributes to the Zn(2+) binding site. Residue glutamine 241 participates in 4-imidazolone-5-propanoate binding. Residue aspartate 313 participates in Fe(3+) binding. Aspartate 313 serves as a coordination point for Zn(2+). Residues asparagine 315 and glycine 317 each contribute to the N-formimidoyl-L-glutamate site. Threonine 318 provides a ligand contact to 4-imidazolone-5-propanoate.

It belongs to the metallo-dependent hydrolases superfamily. HutI family. The cofactor is Zn(2+). Fe(3+) is required as a cofactor.

The protein localises to the cytoplasm. It carries out the reaction 4-imidazolone-5-propanoate + H2O = N-formimidoyl-L-glutamate. It functions in the pathway amino-acid degradation; L-histidine degradation into L-glutamate; N-formimidoyl-L-glutamate from L-histidine: step 3/3. In terms of biological role, catalyzes the hydrolytic cleavage of the carbon-nitrogen bond in imidazolone-5-propanoate to yield N-formimidoyl-L-glutamate. It is the third step in the universal histidine degradation pathway. The polypeptide is Imidazolonepropionase (Burkholderia pseudomallei (strain 668)).